Here is a 504-residue protein sequence, read N- to C-terminus: ATP synthase subunit alpha (504 aa).

Position 169–176 (169–176) interacts with ATP; it reads GDRQTGKT.

This sequence belongs to the ATPase alpha/beta chains family. In terms of assembly, F-type ATPases have 2 components, CF(1) - the catalytic core - and CF(0) - the membrane proton channel. CF(1) has five subunits: alpha(3), beta(3), gamma(1), delta(1), epsilon(1). CF(0) has three main subunits: a(1), b(2) and c(9-12). The alpha and beta chains form an alternating ring which encloses part of the gamma chain. CF(1) is attached to CF(0) by a central stalk formed by the gamma and epsilon chains, while a peripheral stalk is formed by the delta and b chains.

The protein resides in the cell membrane. The catalysed reaction is ATP + H2O + 4 H(+)(in) = ADP + phosphate + 5 H(+)(out). Functionally, produces ATP from ADP in the presence of a proton gradient across the membrane. The alpha chain is a regulatory subunit. In Clostridium botulinum (strain Loch Maree / Type A3), this protein is ATP synthase subunit alpha.